The following is a 738-amino-acid chain: Ethylene receptor (738 aa).

A run of 3 helical transmembrane segments spans residues 23–43 (ISDF…IYFV), 54–74 (VLVQ…INLW), and 89–109 (IAKV…VHII). Residues C65 and H69 each coordinate Cu cation. The GAF domain occupies 158–307 (DRHTILRTTL…VVADQVAVAL (150 aa)). The Histidine kinase domain occupies 350–589 (VMNHEMRTPM…IFIVKLGIPE (240 aa)). H353 bears the Phosphohistidine; by autocatalysis mark. A Response regulatory domain is found at 615–730 (KVLLMDDNGV…KMRSVLSDLL (116 aa)). D663 carries the 4-aspartylphosphate modification.

It belongs to the ethylene receptor family. As to quaternary structure, homodimer; disulfide-linked. Cu cation serves as cofactor. Activation probably requires a transfer of a phosphate group between a His in the transmitter domain and an Asp of the receiver domain. In terms of tissue distribution, higher expression in arils than in seeds.

Its subcellular location is the endoplasmic reticulum membrane. The catalysed reaction is ATP + protein L-histidine = ADP + protein N-phospho-L-histidine.. Functionally, may act early in the ethylene signal transduction pathway, possibly as an ethylene receptor, or as a regulator of the pathway. This chain is Ethylene receptor (ETR1), found in Passiflora edulis (Passion fruit).